The sequence spans 370 residues: Phosphate-binding protein PstS2 (370 aa).

The first 22 residues, 1 to 22 (MKFARSGAAVSLLAAGTLVLTA), serve as a signal peptide directing secretion. A lipid anchor (N-palmitoyl cysteine) is attached at cysteine 23. Residue cysteine 23 is the site of S-diacylglycerol cysteine attachment. Phosphate is bound by residues 54–56 (STA), serine 84, aspartate 102, and 191–193 (SGT).

Belongs to the PstS family. The complex is composed of two ATP-binding proteins (PstB), two transmembrane proteins (PstC and PstA) and a solute-binding protein (PstS).

The protein resides in the cell membrane. The protein localises to the secreted. In terms of biological role, functions in inorganic phosphate uptake, a phosphate-binding protein, although probably not the main uptake protein under phosphate starvation. Part of the ABC transporter complex PstSACB involved in phosphate import. The sequence is that of Phosphate-binding protein PstS2 (pstS2) from Mycobacterium bovis (strain BCG / Pasteur 1173P2).